Here is a 283-residue protein sequence, read N- to C-terminus: Formamidopyrimidine-DNA glycosylase (283 aa).

P2 acts as the Schiff-base intermediate with DNA in catalysis. E3 serves as the catalytic Proton donor. K58 serves as the catalytic Proton donor; for beta-elimination activity. 3 residues coordinate DNA: H100, R119, and R162. The FPG-type zinc finger occupies 247-283 (DVYGREGEPCRRAGCTGTVTRITQSGRSSFYCGKCQR). R273 serves as the catalytic Proton donor; for delta-elimination activity.

The protein belongs to the FPG family. Monomer. Zn(2+) serves as cofactor.

It catalyses the reaction Hydrolysis of DNA containing ring-opened 7-methylguanine residues, releasing 2,6-diamino-4-hydroxy-5-(N-methyl)formamidopyrimidine.. The enzyme catalyses 2'-deoxyribonucleotide-(2'-deoxyribose 5'-phosphate)-2'-deoxyribonucleotide-DNA = a 3'-end 2'-deoxyribonucleotide-(2,3-dehydro-2,3-deoxyribose 5'-phosphate)-DNA + a 5'-end 5'-phospho-2'-deoxyribonucleoside-DNA + H(+). Functionally, involved in base excision repair of DNA damaged by oxidation or by mutagenic agents. Acts as a DNA glycosylase that recognizes and removes damaged bases. Has a preference for oxidized purines, such as 7,8-dihydro-8-oxoguanine (8-oxoG). Has AP (apurinic/apyrimidinic) lyase activity and introduces nicks in the DNA strand. Cleaves the DNA backbone by beta-delta elimination to generate a single-strand break at the site of the removed base with both 3'- and 5'-phosphates. The polypeptide is Formamidopyrimidine-DNA glycosylase (Ruegeria sp. (strain TM1040) (Silicibacter sp.)).